Here is a 228-residue protein sequence, read N- to C-terminus: Secreted LysM effector ECP6 (228 aa).

The signal sequence occupies residues 1 to 18 (MQSMILFAAALMGAAVNG). 4 disulfide bridges follow: Cys-36/Cys-90, Cys-64/Cys-98, Cys-109/Cys-163, and Cys-168/Cys-220. A LysM 1 domain is found at 42-86 (IKYTVVKGDTLTSIAKKFKSGICNIVSVNKLANPNLIELGATLII). Chitin contacts are provided by Thr-51, Thr-53, Asn-76, and Ile-78. N-linked (GlcNAc...) asparagine glycans are attached at residues Asn-89, Asn-95, Asn-127, and Asn-133. 2 LysM domains span residues 115-160 (GSYT…IITV) and 172-216 (GTYN…QIIL). Residues Gly-179, Leu-181, Val-183, Pro-205, Ser-206, and Leu-208 each coordinate chitin. An N-linked (GlcNAc...) asparagine glycan is attached at Asn-222.

Belongs to the secreted LysM effector family. Forms homodimers.

The protein resides in the secreted. Secreted effector that enables the plant pathogenic fungus to manipulate host defenses for successful infection. Binds chitine, but not to any other glycan, including the N-linked glycan chitobiose. Outcompetes host immune receptor for chitin binding through intrachain LysM dimerization. During infection, sequesters chitin oligosaccharides that are released from the cell walls of invading hyphae to prevent elicitation of host immunity. This Passalora fulva (Tomato leaf mold) protein is Secreted LysM effector ECP6.